The primary structure comprises 415 residues: MERVWLLFLLAIRVSPGSAQFNSYNCDANLHSRFPAERDISVYCGVQAITMKINFCTVLFSGYSETDLALNGRHGDSHCRGFINNNTFPAVVIFIINLSTLEGCGNNLVVSTIPGVGASGNATTVQIGNISGYIDTPDPPAVISYLPGLLYKFSCSYPLEYLVNNTQLASSSAAISVRENNGTFVSTLNLLLYNDSTYREQLIIPSIGLPLKTKVFAAVQATNLDGRWNVLMDYCYTTPSGNPNDDTRYDLFLSCDKDPQTTVIENGRSQRGRFSFEVFRFVKHKNQKMSTVFLHCLTKLCRADDCPLLMPICGNRKRRDAQSWTTWAPQSTSGNAVLSAGPIITRSDETPTNNSQLGSLSVPPFQLNAVTSSLISGMVILGVLCFSLLLCSLALLHRKGSTSLVLNGVRNPVFE.

The first 19 residues, M1–A19, serve as a signal peptide directing secretion. Topologically, residues Q20–S373 are extracellular. Residues Y43–D320 enclose the ZP domain. 2 disulfides stabilise this stretch: C44–C155 and C79–C104. N-linked (GlcNAc...) asparagine glycosylation occurs at N164. Cystine bridges form between C235–C296 and C255–C313. A helical transmembrane segment spans residues L374 to A394. Residues L395–E415 are Cytoplasmic-facing.

Proteolytically cleaved before the transmembrane segment to yield the secreted form found in the extracellular matrix of the cupula.

It localises to the cytoplasmic vesicle membrane. The protein localises to the secreted. The protein resides in the extracellular space. It is found in the extracellular matrix. Its function is as follows. Glycoprotein which is a component of the gelatinous extracellular matrix in the cupulae of the vestibular organ. This is Zona pellucida-like domain-containing protein 1 (Zpld1) from Mus musculus (Mouse).